The sequence spans 186 residues: MSIVEIKQQATQKMQQSLESFQHNLTKIRTGRANPGLLDTVHVDYYGSMVPISQVANVALLDARTISVSPWEKGMGAKIEKAIRDSDLGLNPASQGDLIRVPMPAMTEERRKELTKVVRAEGEHAKVAIRNLRRDANDGVKKLVKDKLASEDDERRSQEEIQKFTDRFIADVDKLVTGKEQDIMAV.

Belongs to the RRF family.

The protein localises to the cytoplasm. In terms of biological role, responsible for the release of ribosomes from messenger RNA at the termination of protein biosynthesis. May increase the efficiency of translation by recycling ribosomes from one round of translation to another. The chain is Ribosome-recycling factor from Polaromonas naphthalenivorans (strain CJ2).